Here is a 326-residue protein sequence, read N- to C-terminus: Ketol-acid reductoisomerase (NADP(+)) (326 aa).

The region spanning 1-180 (MDIIHDNAAD…GLTRGGVLEC (180 aa)) is the KARI N-terminal Rossmann domain. NADP(+) is bound by residues 24–27 (YGAQ), R47, and S51. H106 is an active-site residue. Residue G132 coordinates NADP(+). Residues 181–326 (TMAQETYEDL…AKIRSLFERN (146 aa)) enclose the KARI C-terminal knotted domain. Mg(2+) is bound by residues D189, E193, E225, and E229. S250 provides a ligand contact to substrate.

Belongs to the ketol-acid reductoisomerase family. The cofactor is Mg(2+).

The catalysed reaction is (2R)-2,3-dihydroxy-3-methylbutanoate + NADP(+) = (2S)-2-acetolactate + NADPH + H(+). The enzyme catalyses (2R,3R)-2,3-dihydroxy-3-methylpentanoate + NADP(+) = (S)-2-ethyl-2-hydroxy-3-oxobutanoate + NADPH + H(+). It participates in amino-acid biosynthesis; L-isoleucine biosynthesis; L-isoleucine from 2-oxobutanoate: step 2/4. The protein operates within amino-acid biosynthesis; L-valine biosynthesis; L-valine from pyruvate: step 2/4. Functionally, involved in the biosynthesis of branched-chain amino acids (BCAA). Catalyzes an alkyl-migration followed by a ketol-acid reduction of (S)-2-acetolactate (S2AL) to yield (R)-2,3-dihydroxy-isovalerate. In the isomerase reaction, S2AL is rearranged via a Mg-dependent methyl migration to produce 3-hydroxy-3-methyl-2-ketobutyrate (HMKB). In the reductase reaction, this 2-ketoacid undergoes a metal-dependent reduction by NADPH to yield (R)-2,3-dihydroxy-isovalerate. This chain is Ketol-acid reductoisomerase (NADP(+)), found in Akkermansia muciniphila (strain ATCC BAA-835 / DSM 22959 / JCM 33894 / BCRC 81048 / CCUG 64013 / CIP 107961 / Muc).